The following is a 1391-amino-acid chain: Nuclear pore complex protein Nup155 (1391 aa).

O-linked (GlcNAc) serine glycosylation is present at serine 526. Disordered regions lie at residues serine 604–proline 630 and glutamine 985–serine 1012. Serine 1057 bears the Phosphoserine mark.

This sequence belongs to the non-repetitive/WGA-negative nucleoporin family. As to quaternary structure, interacts with GLE1 and NUP35/NUP53. Able to form a heterotrimer with GLE1 and NUP42 in vitro. Forms a complex with NUP35, NUP93, NUP205 and lamin B. Phosphorylated. Phosphorylation and dephosphorylation may be important for the function of NUP155 and may play a role in the reversible disassembly of the nuclear pore complex during mitosis. Post-translationally, disulfide-linked to NUP62. The inner channel of the NPC has a different redox environment from the cytoplasm and allows the formation of interchain disulfide bonds between some nucleoporins, the significant increase of these linkages upon oxidative stress reduces the permeability of the NPC.

It localises to the nucleus. The protein resides in the nuclear pore complex. Its subcellular location is the nucleus membrane. In terms of biological role, essential component of nuclear pore complex. Could be essessential for embryogenesis. Nucleoporins may be involved both in binding and translocating proteins during nucleocytoplasmic transport. The chain is Nuclear pore complex protein Nup155 (Nup155) from Mus musculus (Mouse).